Consider the following 208-residue polypeptide: 2-dehydro-3-deoxy-phosphogluconate aldolase (208 aa).

The active-site Proton acceptor is the E41. R45, T68, and K128 together coordinate pyruvate. The Schiff-base intermediate with substrate role is filled by K128.

It belongs to the KHG/KDPG aldolase family. Homotrimer.

It localises to the cytoplasm. The enzyme catalyses 2-dehydro-3-deoxy-6-phospho-D-gluconate = D-glyceraldehyde 3-phosphate + pyruvate. It functions in the pathway carbohydrate acid metabolism; 2-dehydro-3-deoxy-D-gluconate degradation; D-glyceraldehyde 3-phosphate and pyruvate from 2-dehydro-3-deoxy-D-gluconate: step 2/2. Involved in the degradation of glucose via the Entner-Doudoroff pathway. Catalyzes the reversible, stereospecific retro-aldol cleavage of 2-keto-3-deoxy-6-phosphogluconate (KDPG) to pyruvate and D-glyceraldehyde-3-phosphate. The protein is 2-dehydro-3-deoxy-phosphogluconate aldolase of Zymomonas mobilis subsp. mobilis (strain ATCC 31821 / ZM4 / CP4).